Here is a 668-residue protein sequence, read N- to C-terminus: DNA mismatch repair protein MutL (668 aa).

Residues 437–459 (TYQSQYSETGSHSQETLPLSEQK) are disordered. The segment covering 438–459 (YQSQYSETGSHSQETLPLSEQK) has biased composition (polar residues).

Belongs to the DNA mismatch repair MutL/HexB family.

Its function is as follows. This protein is involved in the repair of mismatches in DNA. It is required for dam-dependent methyl-directed DNA mismatch repair. May act as a 'molecular matchmaker', a protein that promotes the formation of a stable complex between two or more DNA-binding proteins in an ATP-dependent manner without itself being part of a final effector complex. The protein is DNA mismatch repair protein MutL of Leuconostoc citreum (strain KM20).